The following is an 893-amino-acid chain: Valine--tRNA ligase (893 aa).

Positions 57–67 (PNVTGTLHMGH) match the 'HIGH' region motif. A 'KMSKS' region motif is present at residues 545–549 (KMSKS). An ATP-binding site is contributed by Lys548. Positions 821-855 (TSGSVDLEAERKRLEKDLAAAQKELATTEGKLGNE) form a coiled coil.

It belongs to the class-I aminoacyl-tRNA synthetase family. ValS type 1 subfamily. As to quaternary structure, monomer.

It is found in the cytoplasm. It catalyses the reaction tRNA(Val) + L-valine + ATP = L-valyl-tRNA(Val) + AMP + diphosphate. Catalyzes the attachment of valine to tRNA(Val). As ValRS can inadvertently accommodate and process structurally similar amino acids such as threonine, to avoid such errors, it has a 'posttransfer' editing activity that hydrolyzes mischarged Thr-tRNA(Val) in a tRNA-dependent manner. This chain is Valine--tRNA ligase, found in Nocardia farcinica (strain IFM 10152).